A 196-amino-acid chain; its full sequence is N-(5'-phosphoribosyl)anthranilate isomerase (196 aa).

It belongs to the TrpF family.

It carries out the reaction N-(5-phospho-beta-D-ribosyl)anthranilate = 1-(2-carboxyphenylamino)-1-deoxy-D-ribulose 5-phosphate. It functions in the pathway amino-acid biosynthesis; L-tryptophan biosynthesis; L-tryptophan from chorismate: step 3/5. This Sulfurovum sp. (strain NBC37-1) protein is N-(5'-phosphoribosyl)anthranilate isomerase.